Here is a 472-residue protein sequence, read N- to C-terminus: 3-isopropylmalate dehydratase large subunit (472 aa).

[4Fe-4S] cluster-binding residues include C346, C406, and C409.

Belongs to the aconitase/IPM isomerase family. LeuC type 1 subfamily. In terms of assembly, heterodimer of LeuC and LeuD. Requires [4Fe-4S] cluster as cofactor.

It carries out the reaction (2R,3S)-3-isopropylmalate = (2S)-2-isopropylmalate. Its pathway is amino-acid biosynthesis; L-leucine biosynthesis; L-leucine from 3-methyl-2-oxobutanoate: step 2/4. In terms of biological role, catalyzes the isomerization between 2-isopropylmalate and 3-isopropylmalate, via the formation of 2-isopropylmaleate. The sequence is that of 3-isopropylmalate dehydratase large subunit from Thermus thermophilus (strain ATCC BAA-163 / DSM 7039 / HB27).